Here is a 365-residue protein sequence, read N- to C-terminus: MVHIIIGGAVSFIIAILFTPILIRRFSDEGLGQEIREEGPRSHLRKRGTPTMGGIAIIVAIVGGYFLAHLASVFTPSSYKPTASGLLVLGLTVGMGFLGFLDDYIKLAKARNLGLNKKGKLLGQAVLAIGFGVLCLLFLNEHGLKPASTKLSFVRDIDTFDIAIGGGIIGTLIFLLFIYILVTAWSNAVNLTDGLDGLAAGTTAIVMAAYSIMTFWQFRNSCASNASVACYQVRDPLDLSILAACGLGACLGFLWWNAAPAKIFMGDTGSLALGGLVAGLSVTSRTELLMIVIGALFVAETISVVIQVVSFRSTGKRPFRMAPIHHHFENGGWAETTVVVRFWLLTAMFAVAGVSMFYADWLGWT.

The next 10 membrane-spanning stretches (helical) occupy residues 3–23, 54–74, 81–101, 119–139, 162–182, 198–218, 239–259, 263–283, 289–309, and 342–362; these read HIII…PILI, GIAI…ASVF, PTAS…LGFL, GKLL…LLFL, IAIG…YILV, LAAG…FWQF, LSIL…WNAA, IFMG…LSVT, LMIV…IQVV, and FWLL…ADWL.

The protein belongs to the glycosyltransferase 4 family. MraY subfamily. Mg(2+) is required as a cofactor.

Its subcellular location is the cell membrane. The catalysed reaction is UDP-N-acetyl-alpha-D-muramoyl-L-alanyl-gamma-D-glutamyl-meso-2,6-diaminopimeloyl-D-alanyl-D-alanine + di-trans,octa-cis-undecaprenyl phosphate = di-trans,octa-cis-undecaprenyl diphospho-N-acetyl-alpha-D-muramoyl-L-alanyl-D-glutamyl-meso-2,6-diaminopimeloyl-D-alanyl-D-alanine + UMP. Its pathway is cell wall biogenesis; peptidoglycan biosynthesis. Catalyzes the initial step of the lipid cycle reactions in the biosynthesis of the cell wall peptidoglycan: transfers peptidoglycan precursor phospho-MurNAc-pentapeptide from UDP-MurNAc-pentapeptide onto the lipid carrier undecaprenyl phosphate, yielding undecaprenyl-pyrophosphoryl-MurNAc-pentapeptide, known as lipid I. This is Phospho-N-acetylmuramoyl-pentapeptide-transferase from Corynebacterium kroppenstedtii (strain DSM 44385 / JCM 11950 / CIP 105744 / CCUG 35717).